Reading from the N-terminus, the 215-residue chain is MVDLFLGKVLVKNNKDRDELDTEREIILRLQNRILMLFFGSGDSEKCQDFAPTLKDFYKKLTDEFYVERSAQLVLLYISLDSSEEQQEKFLKELPKRCLFLPYEDPYRQELGVMFEVRDLPRVVVLRPDCSVLSPNAVSEICTLGTDCFRNWQEGAELIDRNFMMNEEFDEGKMRSMTDPIRRIKYKVEDEKKKKKKRDDDDDDDDGGGGGGPWG.

The region spanning 1 to 164 is the Thioredoxin; atypical domain; that stretch reads MVDLFLGKVL…GAELIDRNFM (164 aa). The interval 190-215 is disordered; that stretch reads DEKKKKKKRDDDDDDDDGGGGGGPWG.

This sequence belongs to the nucleoredoxin family.

It is found in the cell projection. The protein localises to the cilium. The protein resides in the photoreceptor outer segment. Plays an important role in retinal cone photoreceptor survival. May play a role in cone cell viability, slowing down cone degeneration, does not seem to play a role in degenerating rods. The polypeptide is Nucleoredoxin-like protein 1 (nxnl1) (Danio rerio (Zebrafish)).